The primary structure comprises 134 residues: uncharacterized protein (134 aa).

The next 3 helical transmembrane spans lie at 8–28, 54–74, and 113–133; these read FTSL…TVMY, GFQA…TFLL, and LACF…RLVD.

The protein belongs to the cornichon family.

It localises to the endoplasmic reticulum membrane. This is an uncharacterized protein from Schizosaccharomyces pombe (strain 972 / ATCC 24843) (Fission yeast).